A 65-amino-acid polypeptide reads, in one-letter code: Large ribosomal subunit protein uL29 (65 aa).

The protein belongs to the universal ribosomal protein uL29 family.

The chain is Large ribosomal subunit protein uL29 from Buchnera aphidicola subsp. Baizongia pistaciae (strain Bp).